The primary structure comprises 468 residues: UDP-N-acetylmuramate--L-alanine ligase (468 aa).

116–122 (GTHGKTT) contacts ATP.

The protein belongs to the MurCDEF family.

Its subcellular location is the cytoplasm. The enzyme catalyses UDP-N-acetyl-alpha-D-muramate + L-alanine + ATP = UDP-N-acetyl-alpha-D-muramoyl-L-alanine + ADP + phosphate + H(+). The protein operates within cell wall biogenesis; peptidoglycan biosynthesis. Its function is as follows. Cell wall formation. The polypeptide is UDP-N-acetylmuramate--L-alanine ligase (Fusobacterium nucleatum subsp. nucleatum (strain ATCC 25586 / DSM 15643 / BCRC 10681 / CIP 101130 / JCM 8532 / KCTC 2640 / LMG 13131 / VPI 4355)).